The primary structure comprises 356 residues: Methionine import ATP-binding protein MetN 1 (356 aa).

The ABC transporter domain occupies 2 to 241 (IELKNISVTF…PQQPLTKDFI (240 aa)). Residue 38–45 (GYSGAGKS) participates in ATP binding.

The protein belongs to the ABC transporter superfamily. Methionine importer (TC 3.A.1.24) family. In terms of assembly, the complex is composed of two ATP-binding proteins (MetN), two transmembrane proteins (MetI) and a solute-binding protein (MetQ).

The protein resides in the cell membrane. It carries out the reaction L-methionine(out) + ATP + H2O = L-methionine(in) + ADP + phosphate + H(+). The catalysed reaction is D-methionine(out) + ATP + H2O = D-methionine(in) + ADP + phosphate + H(+). In terms of biological role, part of the ABC transporter complex MetNIQ involved in methionine import. Responsible for energy coupling to the transport system. This chain is Methionine import ATP-binding protein MetN 1, found in Enterococcus faecalis (strain ATCC 700802 / V583).